A 111-amino-acid polypeptide reads, in one-letter code: Probable 4-amino-4-deoxy-L-arabinose-phosphoundecaprenol flippase subunit ArnE (111 aa).

Topologically, residues 1–35 (MIWLTLVFASLLSVAGQLCQKQATCFATVNKRRKH) are cytoplasmic. The chain crosses the membrane as a helical span at residues 36–56 (IVLWLGLALACLGLAMVLWLL). The 70-residue stretch at 40-109 (LGLALACLGL…IIGGIVILGS (70 aa)) folds into the EamA domain. Residues 57 to 60 (VLQN) are Periplasmic-facing. A helical membrane pass occupies residues 61–81 (VPVGIAYPMLSLNFVWVTLAA). The Cytoplasmic segment spans residues 82–87 (VKLWHE). A helical transmembrane segment spans residues 88 to 108 (PVSLRHWCGVAFIIGGIVILG). The Periplasmic portion of the chain corresponds to 109–111 (STV).

Belongs to the ArnE family. Heterodimer of ArnE and ArnF.

Its subcellular location is the cell inner membrane. Its pathway is bacterial outer membrane biogenesis; lipopolysaccharide biosynthesis. Its function is as follows. Translocates 4-amino-4-deoxy-L-arabinose-phosphoundecaprenol (alpha-L-Ara4N-phosphoundecaprenol) from the cytoplasmic to the periplasmic side of the inner membrane. The protein is Probable 4-amino-4-deoxy-L-arabinose-phosphoundecaprenol flippase subunit ArnE of Escherichia coli O6:H1 (strain CFT073 / ATCC 700928 / UPEC).